The following is a 306-amino-acid chain: Serine/threonine-protein kinase KIN28 (306 aa).

The Protein kinase domain maps to 7–290; it reads YTKEKKVGEG…AVQCLESDYF (284 aa). ATP-binding positions include 13–21 and K36; that span reads VGEGTYAVV. The Proton acceptor role is filled by D129. Phosphothreonine; by CAK is present on T162.

Belongs to the protein kinase superfamily. CMGC Ser/Thr protein kinase family. CDC2/CDKX subfamily. CCL1 and KIN28 form the TFIIK complex, a component of the TFIIH holo complex. Component of a complex consisting of KIN28, CCL1 and TFB3. Interacts with TFB3. Also interacts with HNT1 and HOG1. Phosphorylation of Thr-162 regulates the affinity of interaction between CCL1, KIN28 and TFB3. Thr-162 phosphorylation does not vary through the cell cycle and is necessary for full kinase activity.

The protein localises to the nucleus. It catalyses the reaction [DNA-directed RNA polymerase] + ATP = phospho-[DNA-directed RNA polymerase] + ADP + H(+). Its function is as follows. Catalytic component of the TFIIK complex (KIN28-CCL1 dimer) which is the protein kinase component of transcription factor IIH (TFIIH) and phosphorylates the C-terminal domain of RNA polymerase II during transition from transcription to elongation after preinitiation complex (PIC) formation, thereby positively regulating transcription. TFIIH (or factor B) is essential for both basal and activated transcription, and is involved in nucleotide excision repair (NER) of damaged DNA. TFIIH has DNA-dependent ATPase activity and is essential for polymerase II transcription in vitro. Essential for cell proliferation. This is Serine/threonine-protein kinase KIN28 (KIN28) from Saccharomyces cerevisiae (strain ATCC 204508 / S288c) (Baker's yeast).